The sequence spans 650 residues: Chaperone protein DnaK (650 aa).

At threonine 200 the chain carries Phosphothreonine; by autocatalysis. The span at 611–634 shows a compositional bias: low complexity; sequence AQQAGAAGAAGAAAEGASAQGGAQ. The interval 611–650 is disordered; sequence AQQAGAAGAAGAAAEGASAQGGAQPPDDVVDADFKEVKKD.

Belongs to the heat shock protein 70 family.

Acts as a chaperone. The chain is Chaperone protein DnaK from Burkholderia pseudomallei (strain 1710b).